The sequence spans 498 residues: RuvB-like helicase 2 (498 aa).

An ATP-binding site is contributed by 79–86 (GPPSTGKT). The tract at residues 458-498 (VTIGQESTDGSTQPQAKQQEVAQPEATQPQSQPEDDKMETD) is disordered. Over residues 461–489 (GQESTDGSTQPQAKQQEVAQPEATQPQSQ) the composition is skewed to polar residues.

It belongs to the RuvB family. May form heterododecamers with RVB1. Component of the SWR1 chromatin remodeling complex, the INO80 chromatin remodeling complex, and of the R2TP complex.

It is found in the nucleus. It catalyses the reaction ATP + H2O = ADP + phosphate + H(+). DNA helicase which participates in several chromatin remodeling complexes, including the SWR1 and the INO80 complexes. The SWR1 complex mediates the ATP-dependent exchange of histone H2A for the H2A variant HZT1 leading to transcriptional regulation of selected genes by chromatin remodeling. The INO80 complex remodels chromatin by shifting nucleosomes and is involved in DNA repair. Also involved in pre-rRNA processing. In Candida albicans (strain SC5314 / ATCC MYA-2876) (Yeast), this protein is RuvB-like helicase 2 (RVB2).